The sequence spans 507 residues: ATP synthase subunit alpha, chloroplastic (507 aa).

An ATP-binding site is contributed by 170–177; sequence GDRQTGKT.

This sequence belongs to the ATPase alpha/beta chains family. As to quaternary structure, F-type ATPases have 2 components, CF(1) - the catalytic core - and CF(0) - the membrane proton channel. CF(1) has five subunits: alpha(3), beta(3), gamma(1), delta(1), epsilon(1). CF(0) has four main subunits: a, b, b' and c.

The protein resides in the plastid. The protein localises to the chloroplast thylakoid membrane. The catalysed reaction is ATP + H2O + 4 H(+)(in) = ADP + phosphate + 5 H(+)(out). Its function is as follows. Produces ATP from ADP in the presence of a proton gradient across the membrane. The alpha chain is a regulatory subunit. This is ATP synthase subunit alpha, chloroplastic from Oenothera glazioviana (Large-flowered evening primrose).